The sequence spans 465 residues: Neutrophil collagenase (465 aa).

The signal sequence occupies residues 1 to 20 (MFRLKTLPLLIFLHTQLANA). A propeptide spans 21–100 (FPVPEHLEEK…CGVPDSGDFL (80 aa)) (activation peptide). Asn55 carries an N-linked (GlcNAc...) asparagine glycan. Positions 89-96 (PRCGVPDS) match the Cysteine switch motif. Position 91 (Cys91) interacts with Zn(2+). Asn112 carries an N-linked (GlcNAc...) asparagine glycan. Asp157 contacts Ca(2+). His167 and Asp169 together coordinate Zn(2+). Ca(2+)-binding residues include Asp174, Gly175, Asn177, and Ile179. His182 contacts Zn(2+). 3 residues coordinate Ca(2+): Gly189, Gly191, and Asp193. His195 is a binding site for Zn(2+). Ca(2+) contacts are provided by Asp197 and Glu200. His217 lines the Zn(2+) pocket. Glu218 is an active-site residue. Zn(2+)-binding residues include His221 and His227. Hemopexin repeat units lie at residues 276–325 (PKAC…WPFL), 326–372 (PNGL…GFPR), 374–420 (VQAI…FPGV), and 421–464 (NCRV…WLNC). A disulfide bridge connects residues Cys279 and Cys464. Asp286 serves as a coordination point for Ca(2+). Positions 378 and 425 each coordinate Ca(2+).

Belongs to the peptidase M10A family. Requires Ca(2+) as cofactor. It depends on Zn(2+) as a cofactor. Neutrophils. Expressed in uterus. Low levels in kidney and muscle.

It localises to the cytoplasmic granule. The protein resides in the secreted. Its subcellular location is the extracellular space. It is found in the extracellular matrix. It catalyses the reaction Cleavage of interstitial collagens in the triple helical domain. Unlike EC 3.4.24.7, this enzyme cleaves type III collagen more slowly than type I.. Its activity is regulated as follows. Cannot be activated without removal of the activation peptide. Activated by matrilysin. Its function is as follows. Can degrade fibrillar type I, II, and III collagens. May play a role in the degradation of collagen fibers during uterine involution. This Mus musculus (Mouse) protein is Neutrophil collagenase (Mmp8).